A 301-amino-acid chain; its full sequence is MDPQQIKAALGSGLLSFPVTPFDAENRFAAAPYQKHVEWLSGFDAPVLFAAGGTGEFFSLTPDEIPAIVRAAKESAGKTAIVSGCGYGTEIARGIARSVEAAGGDGILLLPHYLIDAPQEGLYAHVKAVCQATGMGVMVYNRDNAVLQADTLARLCDDCPNLVGFKDGTGDIGLVRQITAKMGDRLTYLGGMPTAELFAEAYLGASFTTYSSAVFNFVPALANKFYAALRAGDRATCESILNSFFYPFMELRSRRKGYAVAAVKAGVRLVGFDAGPVRAPLSDLTGEEEEILKALIDAHRE.

The protein belongs to the DapA family.

The catalysed reaction is 5-dehydro-4-deoxy-D-glucarate + H(+) = 2,5-dioxopentanoate + CO2 + H2O. It participates in carbohydrate acid metabolism; D-glucarate degradation; 2,5-dioxopentanoate from D-glucarate: step 2/2. The protein is Probable 5-dehydro-4-deoxyglucarate dehydratase of Cereibacter sphaeroides (strain ATCC 17029 / ATH 2.4.9) (Rhodobacter sphaeroides).